The sequence spans 479 residues: Proline--tRNA ligase (479 aa).

Belongs to the class-II aminoacyl-tRNA synthetase family. ProS type 3 subfamily. As to quaternary structure, homodimer.

The protein localises to the cytoplasm. The enzyme catalyses tRNA(Pro) + L-proline + ATP = L-prolyl-tRNA(Pro) + AMP + diphosphate. Functionally, catalyzes the attachment of proline to tRNA(Pro) in a two-step reaction: proline is first activated by ATP to form Pro-AMP and then transferred to the acceptor end of tRNA(Pro). The polypeptide is Proline--tRNA ligase (Lachnospira eligens (strain ATCC 27750 / DSM 3376 / VPI C15-48 / C15-B4) (Eubacterium eligens)).